The chain runs to 471 residues: Light-independent protochlorophyllide reductase subunit N (471 aa).

Residues cysteine 22, cysteine 47, and cysteine 107 each contribute to the [4Fe-4S] cluster site.

Belongs to the BchN/ChlN family. Protochlorophyllide reductase is composed of three subunits; ChlL, ChlN and ChlB. Forms a heterotetramer of two ChlB and two ChlN subunits. [4Fe-4S] cluster is required as a cofactor.

It is found in the plastid. It localises to the chloroplast. It carries out the reaction chlorophyllide a + oxidized 2[4Fe-4S]-[ferredoxin] + 2 ADP + 2 phosphate = protochlorophyllide a + reduced 2[4Fe-4S]-[ferredoxin] + 2 ATP + 2 H2O. It participates in porphyrin-containing compound metabolism; chlorophyll biosynthesis (light-independent). In terms of biological role, component of the dark-operative protochlorophyllide reductase (DPOR) that uses Mg-ATP and reduced ferredoxin to reduce ring D of protochlorophyllide (Pchlide) to form chlorophyllide a (Chlide). This reaction is light-independent. The NB-protein (ChlN-ChlB) is the catalytic component of the complex. This Huperzia lucidula (Shining clubmoss) protein is Light-independent protochlorophyllide reductase subunit N.